Here is a 324-residue protein sequence, read N- to C-terminus: NAC domain-containing protein 30 (324 aa).

In terms of domain architecture, NAC spans 9-158; sequence MPPGFRFHPT…GWVVCRAFRK (150 aa). Residues 109–164 mediate DNA binding; it reads IGMRKTLVYYKGRAPNGRKSDWIMHEYRLQNSELAPVQEEGWVVCRAFRKPIPNQR. Residues 232 to 244 show a composition bias toward low complexity; the sequence is LPQLDSPSLSPSL. Residues 232-259 form a disordered region; that stretch reads LPQLDSPSLSPSLGTNKDQNESFEQEEE.

This sequence belongs to the plant vascular related NAC-domain protein family. As to quaternary structure, forms homodimer and heterodimers with other VND proteins (e.g. NAC037/VND1, NAC076/VND2 and NAC105/VND3) via their N-termini. Interacts with NAC083/VNI2. Expressed in developing protoxylems in roots and shoots. Detected in root protoxylem poles and in vessels of protoxylems, outermost metaxylems, inner metaxylems, shoots and hypocotyls. Expressed in roots, hypocotyls, cotyledons and leaves. Accumulates in the xylem but not in interfascicular fibers or pith cells in inflorescence stems. Present in developing vessels of the secondary xylem in roots undergoing secondary growth.

The protein localises to the nucleus. Its function is as follows. Transcription activator that binds to the secondary wall NAC binding element (SNBE), 5'-(T/A)NN(C/T)(T/C/G)TNNNNNNNA(A/C)GN(A/C/T)(A/T)-3', in the promoter of target genes (e.g. genes involved in secondary wall biosynthesis, cell wall modification such as xylan accumulation, and programmed cell death). Involved in xylem formation in roots and shoots, especially regulating protoxylem vessel differentiation by promoting immature xylem vessel-specific genes expression. Can activate the expression of several genes including XCP1, MYB46, NAC010/SND3, MYB103, MYB58, MYB63, MYB83, KNAT7, ASL19 and ASL20. Functionally, required for the soilborne fungal pathogen Verticillium longisporum-induced transdifferentiation of chloroplast-containing bundle sheath cells to functional xylem elements leading to stunted growth, vein clearing, and leaf chloroses, as well as xylem hyperplasia within the vasculature of leaves, hypocotyls, and roots due to reinitiation of cambial activity and transdifferentiation of xylem parenchyma cells. This developmental reprogramming also mediates an increased drought stress tolerance. The sequence is that of NAC domain-containing protein 30 from Arabidopsis thaliana (Mouse-ear cress).